Reading from the N-terminus, the 396-residue chain is Elongation factor Tu (396 aa).

The 195-residue stretch at 11-205 folds into the tr-type G domain; that stretch reads KPHVNIGTIG…TVDEYIPTPE (195 aa). The tract at residues 20–27 is G1; it reads GHVDHGKT. Position 20 to 27 (20 to 27) interacts with GTP; that stretch reads GHVDHGKT. Thr-27 provides a ligand contact to Mg(2+). Residues 61-65 are G2; sequence GITIN. Positions 82–85 are G3; the sequence is DAPG. GTP-binding positions include 82 to 86 and 137 to 140; these read DAPGH and NKVD. The G4 stretch occupies residues 137 to 140; sequence NKVD. Residues 175–177 are G5; sequence SAL.

It belongs to the TRAFAC class translation factor GTPase superfamily. Classic translation factor GTPase family. EF-Tu/EF-1A subfamily. In terms of assembly, monomer.

The protein resides in the cytoplasm. The catalysed reaction is GTP + H2O = GDP + phosphate + H(+). GTP hydrolase that promotes the GTP-dependent binding of aminoacyl-tRNA to the A-site of ribosomes during protein biosynthesis. The polypeptide is Elongation factor Tu (Lactobacillus gasseri (strain ATCC 33323 / DSM 20243 / BCRC 14619 / CIP 102991 / JCM 1131 / KCTC 3163 / NCIMB 11718 / NCTC 13722 / AM63)).